Here is a 78-residue protein sequence, read N- to C-terminus: Probable [Fe-S]-dependent transcriptional repressor (78 aa).

Residues cysteine 56, cysteine 61, cysteine 64, and cysteine 70 each coordinate iron-sulfur cluster.

Belongs to the FeoC family.

In terms of biological role, may function as a transcriptional regulator that controls feoABC expression. The sequence is that of Probable [Fe-S]-dependent transcriptional repressor from Escherichia coli O17:K52:H18 (strain UMN026 / ExPEC).